Consider the following 359-residue polypeptide: 5-formaminoimidazole-4-carboxamide-1-(beta)-D-ribofuranosyl 5'-monophosphate synthetase (359 aa).

5-amino-1-(5-phospho-beta-D-ribosyl)imidazole-4-carboxamide contacts are provided by His-27 and Ser-94. The ATP-grasp domain occupies 116 to 340; sequence RRLLRWESER…FGEIVTMGRR (225 aa). ATP is bound by residues 146–208 and Glu-230; that span reads PEDI…TNFC. Asn-258 contributes to the 5-amino-1-(5-phospho-beta-D-ribosyl)imidazole-4-carboxamide binding site. 2 residues coordinate Mg(2+): Gln-297 and Glu-310.

This sequence belongs to the phosphohexose mutase family. The cofactor is Mg(2+). Mn(2+) is required as a cofactor.

It catalyses the reaction 5-amino-1-(5-phospho-beta-D-ribosyl)imidazole-4-carboxamide + formate + ATP = 5-formamido-1-(5-phospho-D-ribosyl)imidazole-4-carboxamide + ADP + phosphate. Its pathway is purine metabolism; IMP biosynthesis via de novo pathway; 5-formamido-1-(5-phospho-D-ribosyl)imidazole-4-carboxamide from 5-amino-1-(5-phospho-D-ribosyl)imidazole-4-carboxamide (formate route): step 1/1. In terms of biological role, catalyzes the ATP- and formate-dependent formylation of 5-aminoimidazole-4-carboxamide-1-beta-d-ribofuranosyl 5'-monophosphate (AICAR) to 5-formaminoimidazole-4-carboxamide-1-beta-d-ribofuranosyl 5'-monophosphate (FAICAR) in the absence of folates. This chain is 5-formaminoimidazole-4-carboxamide-1-(beta)-D-ribofuranosyl 5'-monophosphate synthetase, found in Methanopyrus kandleri (strain AV19 / DSM 6324 / JCM 9639 / NBRC 100938).